A 417-amino-acid chain; its full sequence is 4-hydroxy-3-methylbut-2-enyl diphosphate reductase (417 aa).

[4Fe-4S] cluster is bound at residue Cys-56. His-86 lines the (2E)-4-hydroxy-3-methylbut-2-enyl diphosphate pocket. A dimethylallyl diphosphate-binding site is contributed by His-86. His-86 provides a ligand contact to isopentenyl diphosphate. Cys-151 is a binding site for [4Fe-4S] cluster. Position 179 (His-179) interacts with (2E)-4-hydroxy-3-methylbut-2-enyl diphosphate. A dimethylallyl diphosphate-binding site is contributed by His-179. His-179 is a binding site for isopentenyl diphosphate. The Proton donor role is filled by Glu-181. Thr-244 is a (2E)-4-hydroxy-3-methylbut-2-enyl diphosphate binding site. Cys-282 contributes to the [4Fe-4S] cluster binding site. Positions 311, 312, 313, and 374 each coordinate (2E)-4-hydroxy-3-methylbut-2-enyl diphosphate. Ser-311, Ser-312, Asn-313, and Ser-374 together coordinate dimethylallyl diphosphate. Residues Ser-311, Ser-312, Asn-313, and Ser-374 each contribute to the isopentenyl diphosphate site.

Belongs to the IspH family. [4Fe-4S] cluster serves as cofactor.

The enzyme catalyses isopentenyl diphosphate + 2 oxidized [2Fe-2S]-[ferredoxin] + H2O = (2E)-4-hydroxy-3-methylbut-2-enyl diphosphate + 2 reduced [2Fe-2S]-[ferredoxin] + 2 H(+). It carries out the reaction dimethylallyl diphosphate + 2 oxidized [2Fe-2S]-[ferredoxin] + H2O = (2E)-4-hydroxy-3-methylbut-2-enyl diphosphate + 2 reduced [2Fe-2S]-[ferredoxin] + 2 H(+). Its pathway is isoprenoid biosynthesis; dimethylallyl diphosphate biosynthesis; dimethylallyl diphosphate from (2E)-4-hydroxy-3-methylbutenyl diphosphate: step 1/1. It participates in isoprenoid biosynthesis; isopentenyl diphosphate biosynthesis via DXP pathway; isopentenyl diphosphate from 1-deoxy-D-xylulose 5-phosphate: step 6/6. Its function is as follows. Catalyzes the conversion of 1-hydroxy-2-methyl-2-(E)-butenyl 4-diphosphate (HMBPP) into a mixture of isopentenyl diphosphate (IPP) and dimethylallyl diphosphate (DMAPP). Acts in the terminal step of the DOXP/MEP pathway for isoprenoid precursor biosynthesis. This Gloeobacter violaceus (strain ATCC 29082 / PCC 7421) protein is 4-hydroxy-3-methylbut-2-enyl diphosphate reductase.